A 373-amino-acid chain; its full sequence is Histidinol-phosphate aminotransferase (373 aa).

An N6-(pyridoxal phosphate)lysine modification is found at Lys230.

This sequence belongs to the class-II pyridoxal-phosphate-dependent aminotransferase family. Histidinol-phosphate aminotransferase subfamily. As to quaternary structure, homodimer. Pyridoxal 5'-phosphate is required as a cofactor.

It carries out the reaction L-histidinol phosphate + 2-oxoglutarate = 3-(imidazol-4-yl)-2-oxopropyl phosphate + L-glutamate. The protein operates within amino-acid biosynthesis; L-histidine biosynthesis; L-histidine from 5-phospho-alpha-D-ribose 1-diphosphate: step 7/9. The chain is Histidinol-phosphate aminotransferase from Synechococcus sp. (strain ATCC 27144 / PCC 6301 / SAUG 1402/1) (Anacystis nidulans).